The following is a 406-amino-acid chain: Argininosuccinate synthase (406 aa).

ATP contacts are provided by residues 11-19 (AYSGGLDTS) and Ala-38. Residues Tyr-91 and Ser-96 each contribute to the L-citrulline site. ATP is bound at residue Gly-121. Residues Thr-123, Asn-127, and Asp-128 each contribute to the L-aspartate site. Asn-127 contributes to the L-citrulline binding site. Positions 131, 181, 190, 266, and 278 each coordinate L-citrulline.

This sequence belongs to the argininosuccinate synthase family. Type 1 subfamily. As to quaternary structure, homotetramer.

The protein localises to the cytoplasm. The enzyme catalyses L-citrulline + L-aspartate + ATP = 2-(N(omega)-L-arginino)succinate + AMP + diphosphate + H(+). The protein operates within amino-acid biosynthesis; L-arginine biosynthesis; L-arginine from L-ornithine and carbamoyl phosphate: step 2/3. In Campylobacter jejuni subsp. jejuni serotype O:2 (strain ATCC 700819 / NCTC 11168), this protein is Argininosuccinate synthase.